A 400-amino-acid chain; its full sequence is Deoxyguanosinetriphosphate triphosphohydrolase-like protein (400 aa).

In terms of domain architecture, HD spans 73-215; sequence RLTHSIEVSQ…AAIADDIAYN (143 aa).

Belongs to the dGTPase family. Type 2 subfamily.

The chain is Deoxyguanosinetriphosphate triphosphohydrolase-like protein from Bartonella quintana (strain Toulouse) (Rochalimaea quintana).